Reading from the N-terminus, the 269-residue chain is 1,6-dihydroxycyclohexa-2,4-diene-1-carboxylate dehydrogenase (269 aa).

11–35 (VITGAAQGIGRRVAERMAAEGGRLL) contacts NAD(+). Serine 142 contacts substrate. The active-site Proton acceptor is the tyrosine 153.

It belongs to the short-chain dehydrogenases/reductases (SDR) family. Homodimer.

The catalysed reaction is (1R,6S)-1,6-dihydroxycyclohexa-2,4-diene-1-carboxylate + NAD(+) = catechol + CO2 + NADH. It participates in aromatic compound metabolism; benzoate degradation via hydroxylation; catechol from benzoate: step 2/2. Degradation of 2-hydro-1,2-dihydroxy benzoate (DHB) to catechol. The protein is 1,6-dihydroxycyclohexa-2,4-diene-1-carboxylate dehydrogenase (xylL) of Pseudomonas putida (Arthrobacter siderocapsulatus).